The sequence spans 259 residues: 5'-nucleotidase SurE (259 aa).

A divalent metal cation contacts are provided by Asp8, Asp9, Ser41, and Asn100.

It belongs to the SurE nucleotidase family. Requires a divalent metal cation as cofactor.

It is found in the cytoplasm. It catalyses the reaction a ribonucleoside 5'-phosphate + H2O = a ribonucleoside + phosphate. In terms of biological role, nucleotidase that shows phosphatase activity on nucleoside 5'-monophosphates. The sequence is that of 5'-nucleotidase SurE from Natranaerobius thermophilus (strain ATCC BAA-1301 / DSM 18059 / JW/NM-WN-LF).